Here is a 1073-residue protein sequence, read N- to C-terminus: Carbamoyl phosphate synthase large chain (1073 aa).

Residues 1–403 (MPKRTDIKSI…SLQKALRGLE (403 aa)) are carboxyphosphate synthetic domain. Residues R129, R169, G175, G176, E208, L210, E215, G241, V242, H243, Q285, and E299 each coordinate ATP. One can recognise an ATP-grasp 1 domain in the interval 133 to 328 (DKAMKSIGLA…IARVAAKLAV (196 aa)). Mg(2+) is bound by residues Q285, E299, and N301. 3 residues coordinate Mn(2+): Q285, E299, and N301. The segment at 404–553 (VGVCGLDPKL…YSTYEEECEA (150 aa)) is oligomerization domain. The carbamoyl phosphate synthetic domain stretch occupies residues 554 to 935 (NPSTRDKIMI…AFAKAQMGAS (382 aa)). Residues 678–869 (QQMVERLNLR…LAMIAARVMA (192 aa)) form the ATP-grasp 2 domain. ATP is bound by residues R714, H753, L755, E760, G785, V786, H787, S788, Q828, and E840. Mg(2+) contacts are provided by Q828, E840, and N842. Positions 828, 840, and 842 each coordinate Mn(2+). Residues 936 to 1073 (EVLPTGGTAF…LQDLHAGLKA (138 aa)) form the MGS-like domain. The segment at 936 to 1073 (EVLPTGGTAF…LQDLHAGLKA (138 aa)) is allosteric domain.

The protein belongs to the CarB family. As to quaternary structure, composed of two chains; the small (or glutamine) chain promotes the hydrolysis of glutamine to ammonia, which is used by the large (or ammonia) chain to synthesize carbamoyl phosphate. Tetramer of heterodimers (alpha,beta)4. The cofactor is Mg(2+). Mn(2+) is required as a cofactor.

The enzyme catalyses hydrogencarbonate + L-glutamine + 2 ATP + H2O = carbamoyl phosphate + L-glutamate + 2 ADP + phosphate + 2 H(+). It carries out the reaction hydrogencarbonate + NH4(+) + 2 ATP = carbamoyl phosphate + 2 ADP + phosphate + 2 H(+). Its pathway is amino-acid biosynthesis; L-arginine biosynthesis; carbamoyl phosphate from bicarbonate: step 1/1. It functions in the pathway pyrimidine metabolism; UMP biosynthesis via de novo pathway; (S)-dihydroorotate from bicarbonate: step 1/3. Functionally, large subunit of the glutamine-dependent carbamoyl phosphate synthetase (CPSase). CPSase catalyzes the formation of carbamoyl phosphate from the ammonia moiety of glutamine, carbonate, and phosphate donated by ATP, constituting the first step of 2 biosynthetic pathways, one leading to arginine and/or urea and the other to pyrimidine nucleotides. The large subunit (synthetase) binds the substrates ammonia (free or transferred from glutamine from the small subunit), hydrogencarbonate and ATP and carries out an ATP-coupled ligase reaction, activating hydrogencarbonate by forming carboxy phosphate which reacts with ammonia to form carbamoyl phosphate. The polypeptide is Carbamoyl phosphate synthase large chain (Pseudomonas syringae pv. tomato (strain ATCC BAA-871 / DC3000)).